We begin with the raw amino-acid sequence, 212 residues long: MQILLAALVAYLIGSVSFAVVVSAAMGLADPRSYGSKNPGATNVLRSGNKKAAILTLVGDAFKGWLAVWLARHFGLPDVAVACVAIAVFLGHLYPVFFRFQGGKGVATAAGVLLAVHPVLGLATALTWLIVAFFFRYSSLAALVAAVFAPLFDVFLFGTSHNPVAWAVLAMSVLLVWRHRGNISKLLAGQESRIGDKKKAAADGGAQDGGKL.

4 helical membrane-spanning segments follow: residues 3-23, 78-98, 115-135, and 155-177; these read ILLA…VVVS, DVAV…PVFF, AVHP…AFFF, and FLFG…LLVW.

It belongs to the PlsY family. As to quaternary structure, probably interacts with PlsX.

It is found in the cell inner membrane. It carries out the reaction an acyl phosphate + sn-glycerol 3-phosphate = a 1-acyl-sn-glycero-3-phosphate + phosphate. It participates in lipid metabolism; phospholipid metabolism. Its function is as follows. Catalyzes the transfer of an acyl group from acyl-phosphate (acyl-PO(4)) to glycerol-3-phosphate (G3P) to form lysophosphatidic acid (LPA). This enzyme utilizes acyl-phosphate as fatty acyl donor, but not acyl-CoA or acyl-ACP. The chain is Glycerol-3-phosphate acyltransferase from Burkholderia ambifaria (strain ATCC BAA-244 / DSM 16087 / CCUG 44356 / LMG 19182 / AMMD) (Burkholderia cepacia (strain AMMD)).